Consider the following 227-residue polypeptide: AN1-type zinc finger protein 3 (227 aa).

Residues 12–44 (PSLPPRCPCGFWGSSKTMNLCSKCFADFQKKQP) form an A20-type zinc finger. Zn(2+) is bound by residues cysteine 18, cysteine 20, cysteine 32, and cysteine 35. Disordered stretches follow at residues 41 to 100 (KKQP…EECG) and 113 to 148 (PTKR…ETSR). Residues 49–59 (APSTSNSQSDL) show a composition bias toward polar residues. A compositionally biased stretch (low complexity) spans 66–77 (SDNNNTSITTPT). Composition is skewed to polar residues over residues 78-94 (LSPS…VTSP) and 113-127 (PTKR…SENE). The segment covering 135–148 (RLLENTERSEETSR) has biased composition (basic and acidic residues). Residues 151 to 200 (QKSRRRCFQCQTKLELVQQELGSCRCGYVFCMLHRLPEQHDCTFDHMGRG) form an AN1-type zinc finger. Residues cysteine 157, cysteine 160, cysteine 174, cysteine 176, cysteine 181, histidine 184, histidine 190, and cysteine 192 each contribute to the Zn(2+) site.

The polypeptide is AN1-type zinc finger protein 3 (ZFAND3) (Homo sapiens (Human)).